The primary structure comprises 122 residues: Large ribosomal subunit protein uL14 (122 aa).

It belongs to the universal ribosomal protein uL14 family. Part of the 50S ribosomal subunit. Forms a cluster with proteins L3 and L19. In the 70S ribosome, L14 and L19 interact and together make contacts with the 16S rRNA in bridges B5 and B8.

Functionally, binds to 23S rRNA. Forms part of two intersubunit bridges in the 70S ribosome. This Caulobacter sp. (strain K31) protein is Large ribosomal subunit protein uL14.